Consider the following 310-residue polypeptide: 1-aminocyclopropane-1-carboxylate oxidase 1 (310 aa).

Residues 113–133 (EELSKTMDEYVCQLHKFAERL) adopt a coiled-coil conformation. A Fe2OG dioxygenase domain is found at 158–259 (PAFGTKVAKY…RLSIATFYNP (102 aa)). Residues His-182, Asp-184, and His-240 each contribute to the Fe cation site. A 2-oxoglutarate-binding site is contributed by Arg-250.

It belongs to the iron/ascorbate-dependent oxidoreductase family. The cofactor is Fe(2+).

The catalysed reaction is 1-aminocyclopropane-1-carboxylate + L-ascorbate + O2 = ethene + L-dehydroascorbate + hydrogen cyanide + CO2 + 2 H2O. Its pathway is alkene biosynthesis; ethylene biosynthesis via S-adenosyl-L-methionine; ethylene from S-adenosyl-L-methionine: step 2/2. Functionally, enzyme involved in the ethylene biosynthesis. May promote stem elongation by maximizing the extensibility cells, possibly by activating ethylene biosynthesis, in response to very-long-chain fatty acids (VLCFAs C20:0 to C30:0). The chain is 1-aminocyclopropane-1-carboxylate oxidase 1 (ACO1) from Arabidopsis thaliana (Mouse-ear cress).